Reading from the N-terminus, the 1200-residue chain is Ice nucleation protein (1200 aa).

The interval 176 to 1151 (ATYGSTLSGD…LSAGEDSILI (976 aa)) is octapeptide periodicity.

It belongs to the bacterial ice nucleation protein family.

It is found in the cell outer membrane. Ice nucleation proteins enable bacteria to nucleate crystallization in supercooled water. This is Ice nucleation protein (inaZ) from Pseudomonas syringae pv. syringae.